A 136-amino-acid chain; its full sequence is Early E3 15.3 kDa protein (136 aa).

It belongs to the adenoviridae E3_15 family.

In terms of biological role, protects virus-infected cells from TNF-induced cytolysis. This Human adenovirus B serotype 3 (HAdV-3) protein is Early E3 15.3 kDa protein.